Reading from the N-terminus, the 396-residue chain is Elongation factor Tu 2 (396 aa).

Residues 10–206 (KPHCNVGTIG…AVDDYIPQPE (197 aa)) enclose the tr-type G domain. A G1 region spans residues 19–26 (GHVDHGKT). GTP is bound at residue 19–26 (GHVDHGKT). Thr26 is a Mg(2+) binding site. A G2 region spans residues 60–64 (GITIS). Residues 81 to 84 (DCPG) form a G3 region. GTP contacts are provided by residues 81-85 (DCPGH) and 136-139 (NKCD). Residues 136–139 (NKCD) are G4. The G5 stretch occupies residues 174-176 (SAL).

The protein belongs to the TRAFAC class translation factor GTPase superfamily. Classic translation factor GTPase family. EF-Tu/EF-1A subfamily. In terms of assembly, monomer.

The protein resides in the cytoplasm. It carries out the reaction GTP + H2O = GDP + phosphate + H(+). GTP hydrolase that promotes the GTP-dependent binding of aminoacyl-tRNA to the A-site of ribosomes during protein biosynthesis. The chain is Elongation factor Tu 2 from Rhodospirillum rubrum (strain ATCC 11170 / ATH 1.1.1 / DSM 467 / LMG 4362 / NCIMB 8255 / S1).